Consider the following 508-residue polypeptide: Serine carboxypeptidase 3 (508 aa).

Positions 1 to 19 (MVTTPRLVSLLLLLALCAA) are cleaved as a signal peptide. Residues 20–80 (AAGALRLPPD…PGQLLERRVT (61 aa)) constitute a propeptide that is removed on maturation. The interval 48–67 (PKDSSSSSGRHGARVGEGNE) is disordered. At Leu-81 the chain carries Blocked amino end (Leu). Cystine bridges form between Cys-133-Cys-373, Cys-301-Cys-316, and Cys-339-Cys-344. A glycan (N-linked (GlcNAc...) asparagine) is linked at Asn-151. Ser-223 is a catalytic residue. Asp-411 is an active-site residue. Cys-414 contributes to the substrate binding site. His-468 is an active-site residue. A propeptide spanning residues 492–508 (EAVPEEESSTTSFYAAM) is cleaved from the precursor.

This sequence belongs to the peptidase S10 family. Monomer.

The protein localises to the secreted. It carries out the reaction Release of a C-terminal amino acid with broad specificity.. With respect to regulation, inhibited by mercuric ions. In Hordeum vulgare (Barley), this protein is Serine carboxypeptidase 3 (CBP3).